Reading from the N-terminus, the 395-residue chain is Acetyl-CoA acetyltransferase (395 aa).

The active-site Acyl-thioester intermediate is the Cys-90. Residues Tyr-185 and Lys-230 each coordinate CoA. Tyr-185 is a binding site for K(+). Residues Ala-246, Ala-247, and Ala-249 each contribute to the K(+) site. Ser-250 contacts CoA. Val-347 is a K(+) binding site. Catalysis depends on proton acceptor residues His-351 and Cys-381.

This sequence belongs to the thiolase-like superfamily. Thiolase family. Homotetramer.

The protein resides in the cytoplasm. The catalysed reaction is 2 acetyl-CoA = acetoacetyl-CoA + CoA. It participates in metabolic intermediate biosynthesis; (R)-mevalonate biosynthesis; (R)-mevalonate from acetyl-CoA: step 1/3. Its function is as follows. Acetyl-CoA acetyltransferase; part of the first module of ergosterol biosynthesis pathway that includes the early steps of the pathway, conserved across all eukaryotes, and which results in the formation of mevalonate from acetyl-coenzyme A (acetyl-CoA). Erg10 catalyzes the formation of acetoacetyl-CoA from acetyl-CoA. The first module starts with the action of the cytosolic acetyl-CoA acetyltransferase eg10 that catalyzes the formation of acetoacetyl-CoA. The hydroxymethylglutaryl-CoA synthases erg13 then condenses acetyl-CoA with acetoacetyl-CoA to form HMG-CoA. The rate-limiting step of the early module is the reduction to mevalonate by the 3-hydroxy-3-methylglutaryl-coenzyme A (HMG-CoA) reductases hcs1. The protein is Acetyl-CoA acetyltransferase (erg10) of Schizosaccharomyces pombe (strain 972 / ATCC 24843) (Fission yeast).